A 146-amino-acid chain; its full sequence is Ecotin-like protein 1 (146 aa).

It belongs to the protease inhibitor I11 (ecotin) family.

This is Ecotin-like protein 1 (ISP1) from Leishmania infantum.